Consider the following 308-residue polypeptide: tRNA dimethylallyltransferase (308 aa).

Residue 10–17 (GPTGVGKT) participates in ATP binding. 12 to 17 (TGVGKT) is a substrate binding site. The segment at 35-38 (DSRQ) is interaction with substrate tRNA.

This sequence belongs to the IPP transferase family. In terms of assembly, monomer. Mg(2+) is required as a cofactor.

The enzyme catalyses adenosine(37) in tRNA + dimethylallyl diphosphate = N(6)-dimethylallyladenosine(37) in tRNA + diphosphate. Functionally, catalyzes the transfer of a dimethylallyl group onto the adenine at position 37 in tRNAs that read codons beginning with uridine, leading to the formation of N6-(dimethylallyl)adenosine (i(6)A). This chain is tRNA dimethylallyltransferase, found in Fervidobacterium nodosum (strain ATCC 35602 / DSM 5306 / Rt17-B1).